Reading from the N-terminus, the 201-residue chain is Recombination protein RecR (201 aa).

Residues 60–75 (CKKCFNLTSEDECEIC) form a C4-type zinc finger. One can recognise a Toprim domain in the interval 83–177 (KLICVVAETK…KVTRIAYGLP (95 aa)).

Belongs to the RecR family.

In terms of biological role, may play a role in DNA repair. It seems to be involved in an RecBC-independent recombinational process of DNA repair. It may act with RecF and RecO. This is Recombination protein RecR from Prochlorococcus marinus (strain MIT 9215).